A 568-amino-acid polypeptide reads, in one-letter code: Kelch-like protein 12 (568 aa).

One can recognise a BTB domain in the interval 33-100 (CDVTLRVEQK…VYTETVHVTV (68 aa)). A BACK domain is found at 135–236 (CLGIRDFAET…LTPRYITDVI (102 aa)). 6 Kelch repeats span residues 282–329 (VLLV…SLHD), 331–379 (IYVI…TLGD), 380–426 (MIYV…VASG), 427–473 (VIYC…LLND), 475–520 (IYVV…VLRG), and 522–567 (LYAI…VLRE). The segment at 405 to 568 (QWSMLGDMQT…DAGVCVLREK (164 aa)) is interaction with DVL3.

Component of the BCR(KLHL12) E3 ubiquitin ligase complex, at least composed of CUL3 and KLHL12 and RBX1. This complex interacts with DVL3 upon activation of the Wnt signaling pathway by WNT3A. Interacts with DRD4, KLHL2 and SEC31A. Interacts with PEF1 and PDCD6/ALG-2; interaction takes place in response to cytosolic calcium increase and leads to bridge together the BCR(KLHL12) complex and SEC31 (SEC31A or SEC31B). Ubiquitinated by the SCF(FBXL17) complex, leading to its degradation by the proteasome: ubiquitination by the SCF(FBXL17) complex takes place when aberrant BTB domain dimers are formed. As to expression, ubiquitously expressed. Highly expressed in testis and at lower levels in the submandibular salivary gland.

Its subcellular location is the cytoplasmic vesicle. It localises to the COPII-coated vesicle. It participates in protein modification; protein ubiquitination. Substrate-specific adapter of a BCR (BTB-CUL3-RBX1) E3 ubiquitin ligase complex that acts as a negative regulator of Wnt signaling pathway and ER-Golgi transport. The BCR(KLHL12) complex is involved in ER-Golgi transport by regulating the size of COPII coats, thereby playing a key role in collagen export, which is required for embryonic stem (ES) cells division: BCR(KLHL12) acts by mediating monoubiquitination of SEC31 (SEC31A or SEC31B). The BCR(KLHL12) complex is also involved in neural crest specification: in response to cytosolic calcium increase, interacts with the heterodimer formed with PEF1 and PDCD6/ALG-2, leading to bridge together the BCR(KLHL12) complex and SEC31 (SEC31A or SEC31B), promoting monoubiquitination of SEC31 and subsequent collagen export. As part of the BCR(KLHL12) complex, also acts as a negative regulator of the Wnt signaling pathway by mediating ubiquitination and subsequent proteolysis of DVL3. The BCR(KLHL12) complex also mediates polyubiquitination of DRD4 and PEF1, without leading to degradation of these proteins. This chain is Kelch-like protein 12 (KLHL12), found in Homo sapiens (Human).